Here is a 172-residue protein sequence, read N- to C-terminus: MDLKALIRDIPDFPKPGIMFRDITTLLSHGEGLRYTIDTLTEKCQTAGLIPDYVVGMESRGFLFGVPLAYQLQAGFVPVRKPGKLPAAVHQVEYELEYGTDRLEIHQDALADHHRVLIVDDLIATGGTAKATADLLEKIGCEVLGFAFIIELTGLGGREKLPDVPIITLVDY.

This sequence belongs to the purine/pyrimidine phosphoribosyltransferase family. In terms of assembly, homodimer.

The protein localises to the cytoplasm. It catalyses the reaction AMP + diphosphate = 5-phospho-alpha-D-ribose 1-diphosphate + adenine. Its pathway is purine metabolism; AMP biosynthesis via salvage pathway; AMP from adenine: step 1/1. Its function is as follows. Catalyzes a salvage reaction resulting in the formation of AMP, that is energically less costly than de novo synthesis. The polypeptide is Adenine phosphoribosyltransferase (Rippkaea orientalis (strain PCC 8801 / RF-1) (Cyanothece sp. (strain PCC 8801))).